The chain runs to 228 residues: Cytidylate kinase (228 aa).

Position 17-25 (17-25 (GPTASGKGT)) interacts with ATP.

This sequence belongs to the cytidylate kinase family. Type 1 subfamily.

It is found in the cytoplasm. It catalyses the reaction CMP + ATP = CDP + ADP. The enzyme catalyses dCMP + ATP = dCDP + ADP. In Burkholderia ambifaria (strain ATCC BAA-244 / DSM 16087 / CCUG 44356 / LMG 19182 / AMMD) (Burkholderia cepacia (strain AMMD)), this protein is Cytidylate kinase.